Reading from the N-terminus, the 513-residue chain is 2-isopropylmalate synthase (513 aa).

Residues 5 to 268 enclose the Pyruvate carboxyltransferase domain; it reads LIIFDTTLRD…DIGVDTTQIV (264 aa). Mn(2+) is bound by residues Asp14, His202, His204, and Asn239. A regulatory domain region spans residues 394 to 513; sequence RFISLSQRSE…KAVQKINPQI (120 aa).

The protein belongs to the alpha-IPM synthase/homocitrate synthase family. LeuA type 1 subfamily. In terms of assembly, homodimer. It depends on Mn(2+) as a cofactor.

It localises to the cytoplasm. The catalysed reaction is 3-methyl-2-oxobutanoate + acetyl-CoA + H2O = (2S)-2-isopropylmalate + CoA + H(+). It participates in amino-acid biosynthesis; L-leucine biosynthesis; L-leucine from 3-methyl-2-oxobutanoate: step 1/4. Its function is as follows. Catalyzes the condensation of the acetyl group of acetyl-CoA with 3-methyl-2-oxobutanoate (2-ketoisovalerate) to form 3-carboxy-3-hydroxy-4-methylpentanoate (2-isopropylmalate). This Cupriavidus necator (strain ATCC 17699 / DSM 428 / KCTC 22496 / NCIMB 10442 / H16 / Stanier 337) (Ralstonia eutropha) protein is 2-isopropylmalate synthase.